The sequence spans 629 residues: tRNA uridine 5-carboxymethylaminomethyl modification enzyme MnmG (629 aa).

FAD is bound by residues 13 to 18 (GGGHAG), valine 125, and serine 180. 273-287 (GPRYCPSIEDKVMRF) is an NAD(+) binding site. Position 370 (glutamine 370) interacts with FAD.

The protein belongs to the MnmG family. In terms of assembly, homodimer. Heterotetramer of two MnmE and two MnmG subunits. The cofactor is FAD.

It localises to the cytoplasm. NAD-binding protein involved in the addition of a carboxymethylaminomethyl (cmnm) group at the wobble position (U34) of certain tRNAs, forming tRNA-cmnm(5)s(2)U34. This chain is tRNA uridine 5-carboxymethylaminomethyl modification enzyme MnmG, found in Escherichia coli O139:H28 (strain E24377A / ETEC).